The following is a 449-amino-acid chain: Integrator complex subunit 15 (449 aa).

This sequence belongs to the Integrator subunit 15 family. As to quaternary structure, component of the Integrator complex, composed of core subunits INTS1, INTS2, INTS3, INTS4, INTS5, INTS6, INTS7, INTS8, INTS9/RC74, INTS10, INTS11/CPSF3L, INTS12, INTS13, INTS14 and INTS15. The core complex associates with protein phosphatase 2A subunits PPP2CA and PPP2R1A, to form the Integrator-PP2A (INTAC) complex. INTS15 is part of the tail subcomplex, composed of INTS10, INTS13, INTS14 and INTS15.

It is found in the nucleus. The protein localises to the chromosome. Component of the integrator complex, a multiprotein complex that terminates RNA polymerase II (Pol II) transcription in the promoter-proximal region of genes. The integrator complex provides a quality checkpoint during transcription elongation by driving premature transcription termination of transcripts that are unfavorably configured for transcriptional elongation: the complex terminates transcription by (1) catalyzing dephosphorylation of the C-terminal domain (CTD) of Pol II subunit POLR2A/RPB1 and SUPT5H/SPT5, (2) degrading the exiting nascent RNA transcript via endonuclease activity and (3) promoting the release of Pol II from bound DNA. The integrator complex is also involved in terminating the synthesis of non-coding Pol II transcripts, such as enhancer RNAs (eRNAs), small nuclear RNAs (snRNAs), telomerase RNAs and long non-coding RNAs (lncRNAs). INTS15 is part of the integrator tail module that acts as a platform for the recruitment of transcription factors at promoters. Within the integrator complex, INTS15 is required to bridge different integrator modules. The sequence is that of Integrator complex subunit 15 from Homo sapiens (Human).